The sequence spans 267 residues: Tryptophan synthase alpha chain (267 aa).

Residues Glu51 and Asp62 each act as proton acceptor in the active site.

This sequence belongs to the TrpA family. In terms of assembly, tetramer of two alpha and two beta chains.

It carries out the reaction (1S,2R)-1-C-(indol-3-yl)glycerol 3-phosphate + L-serine = D-glyceraldehyde 3-phosphate + L-tryptophan + H2O. Its pathway is amino-acid biosynthesis; L-tryptophan biosynthesis; L-tryptophan from chorismate: step 5/5. Functionally, the alpha subunit is responsible for the aldol cleavage of indoleglycerol phosphate to indole and glyceraldehyde 3-phosphate. In Prochlorococcus marinus (strain SARG / CCMP1375 / SS120), this protein is Tryptophan synthase alpha chain.